The sequence spans 547 residues: CTP synthase (547 aa).

Positions 1–267 are amidoligase domain; the sequence is MTKFVFVTGG…AQQTLALLNL (267 aa). Ser13 provides a ligand contact to CTP. Ser13 contributes to the UTP binding site. ATP contacts are provided by residues 14–19 and Asp71; that span reads SIGKGI. Mg(2+) is bound by residues Asp71 and Glu141. Residues 148 to 150, 188 to 193, and Lys224 contribute to the CTP site; these read DIE and KTKPTQ. UTP-binding positions include 188–193 and Lys224; that span reads KTKPTQ. The region spanning 292–534 is the Glutamine amidotransferase type-1 domain; the sequence is EIALVGKYVQ…VKAAVDHYST (243 aa). Residue Gly354 participates in L-glutamine binding. Cys381 (nucleophile; for glutamine hydrolysis) is an active-site residue. L-glutamine contacts are provided by residues 382-385, Glu405, and Arg462; that span reads LGMQ. Catalysis depends on residues His507 and Glu509.

This sequence belongs to the CTP synthase family. As to quaternary structure, homotetramer.

The enzyme catalyses UTP + L-glutamine + ATP + H2O = CTP + L-glutamate + ADP + phosphate + 2 H(+). The catalysed reaction is L-glutamine + H2O = L-glutamate + NH4(+). It catalyses the reaction UTP + NH4(+) + ATP = CTP + ADP + phosphate + 2 H(+). It participates in pyrimidine metabolism; CTP biosynthesis via de novo pathway; CTP from UDP: step 2/2. With respect to regulation, allosterically activated by GTP, when glutamine is the substrate; GTP has no effect on the reaction when ammonia is the substrate. The allosteric effector GTP functions by stabilizing the protein conformation that binds the tetrahedral intermediate(s) formed during glutamine hydrolysis. Inhibited by the product CTP, via allosteric rather than competitive inhibition. Its function is as follows. Catalyzes the ATP-dependent amination of UTP to CTP with either L-glutamine or ammonia as the source of nitrogen. Regulates intracellular CTP levels through interactions with the four ribonucleotide triphosphates. The sequence is that of CTP synthase from Rippkaea orientalis (strain PCC 8801 / RF-1) (Cyanothece sp. (strain PCC 8801)).